A 562-amino-acid polypeptide reads, in one-letter code: Urocanate hydratase (562 aa).

NAD(+)-binding positions include 53–54, Gln131, 177–179, Glu197, Arg202, 243–244, 268–272, 278–279, and Tyr327; these read GG, GMG, NA, QTSAH, and YL. Residue Cys415 is part of the active site. Gly497 contributes to the NAD(+) binding site.

Belongs to the urocanase family. The cofactor is NAD(+).

It is found in the cytoplasm. It catalyses the reaction 4-imidazolone-5-propanoate = trans-urocanate + H2O. It functions in the pathway amino-acid degradation; L-histidine degradation into L-glutamate; N-formimidoyl-L-glutamate from L-histidine: step 2/3. Functionally, catalyzes the conversion of urocanate to 4-imidazolone-5-propionate. This is Urocanate hydratase from Chelativorans sp. (strain BNC1).